The primary structure comprises 389 residues: Chalcone synthase (389 aa).

C164 is an active-site residue.

The protein belongs to the thiolase-like superfamily. Chalcone/stilbene synthases family.

It carries out the reaction (E)-4-coumaroyl-CoA + 3 malonyl-CoA + 3 H(+) = 2',4,4',6'-tetrahydroxychalcone + 3 CO2 + 4 CoA. Its pathway is secondary metabolite biosynthesis; flavonoid biosynthesis. In terms of biological role, the primary product of this enzyme is 4,2',4',6'-tetrahydroxychalcone (also termed naringenin-chalcone or chalcone) which can under specific conditions spontaneously isomerize into naringenin. The protein is Chalcone synthase (CHS) of Hydrangea macrophylla (Bigleaf hydrangea).